We begin with the raw amino-acid sequence, 75 residues long: Conotoxin Vc6a (75 aa).

The N-terminal stretch at Met1–Ala22 is a signal peptide. Residues Asp23–Glu49 constitute a propeptide that is removed on maturation. 3 cysteine pairs are disulfide-bonded: Cys51-Cys66, Cys58-Cys69, and Cys65-Cys74.

As to expression, expressed by the venom duct.

Its subcellular location is the secreted. This Conus victoriae (Queen Victoria cone) protein is Conotoxin Vc6a.